The chain runs to 173 residues: Crossover junction endodeoxyribonuclease RuvC (173 aa).

Catalysis depends on residues aspartate 8, glutamate 67, and aspartate 139. Aspartate 8, glutamate 67, and aspartate 139 together coordinate Mg(2+).

It belongs to the RuvC family. As to quaternary structure, homodimer which binds Holliday junction (HJ) DNA. The HJ becomes 2-fold symmetrical on binding to RuvC with unstacked arms; it has a different conformation from HJ DNA in complex with RuvA. In the full resolvosome a probable DNA-RuvA(4)-RuvB(12)-RuvC(2) complex forms which resolves the HJ. It depends on Mg(2+) as a cofactor.

The protein localises to the cytoplasm. It catalyses the reaction Endonucleolytic cleavage at a junction such as a reciprocal single-stranded crossover between two homologous DNA duplexes (Holliday junction).. Its function is as follows. The RuvA-RuvB-RuvC complex processes Holliday junction (HJ) DNA during genetic recombination and DNA repair. Endonuclease that resolves HJ intermediates. Cleaves cruciform DNA by making single-stranded nicks across the HJ at symmetrical positions within the homologous arms, yielding a 5'-phosphate and a 3'-hydroxyl group; requires a central core of homology in the junction. The consensus cleavage sequence is 5'-(A/T)TT(C/G)-3'. Cleavage occurs on the 3'-side of the TT dinucleotide at the point of strand exchange. HJ branch migration catalyzed by RuvA-RuvB allows RuvC to scan DNA until it finds its consensus sequence, where it cleaves and resolves the cruciform DNA. This is Crossover junction endodeoxyribonuclease RuvC from Erwinia tasmaniensis (strain DSM 17950 / CFBP 7177 / CIP 109463 / NCPPB 4357 / Et1/99).